Here is a 338-residue protein sequence, read N- to C-terminus: Lipoate-protein ligase A (338 aa).

One can recognise a BPL/LPL catalytic domain in the interval 29–216 (PATQRVLFLW…AFFAHYGERV (188 aa)). ATP-binding positions include Arg71, 76-79 (GAVF), and Lys134. Lys134 contacts (R)-lipoate.

It belongs to the LplA family. In terms of assembly, monomer.

The protein resides in the cytoplasm. It carries out the reaction L-lysyl-[lipoyl-carrier protein] + (R)-lipoate + ATP = N(6)-[(R)-lipoyl]-L-lysyl-[lipoyl-carrier protein] + AMP + diphosphate + H(+). Its pathway is protein modification; protein lipoylation via exogenous pathway; protein N(6)-(lipoyl)lysine from lipoate: step 1/2. It functions in the pathway protein modification; protein lipoylation via exogenous pathway; protein N(6)-(lipoyl)lysine from lipoate: step 2/2. Functionally, catalyzes both the ATP-dependent activation of exogenously supplied lipoate to lipoyl-AMP and the transfer of the activated lipoyl onto the lipoyl domains of lipoate-dependent enzymes. This is Lipoate-protein ligase A from Escherichia coli (strain K12 / MC4100 / BW2952).